Consider the following 417-residue polypeptide: MSSKYPRSVRCCLPLCALTLEAALILLFYFFTHYDASLEDQKGLVASYQVGQDLTVMAAIGFGFLTSSFRRHSWSSVAFNLFMLALGVQWAILLDGFLSQFPPGKVVITLFSIRLATTSALSVLISAGAVLGYVNLVQLVVMVLVEVTALGTMRMVISNIFNTDYHMNMMHFYLFTAYFGVTVAWCLPKPLPDVKEDKDQIATIPSLSAMLGALFLWMFWPSFNSALLRSPIERKNAVFNTYYALAVSVVTAISGSSLAHPQGKISMTYVHSAVLAGGVAVGTSCHLIPSPWLAMVLGLVAGLISIGGAKCGPGCCNRVLGIPDSSVMHYNFSLLGLLGEIIYIVLVVRHTVWNGNGMIGFQVLLSMGELSLAIAIALTSGLLTGLLLNLKIWKAPHVAKYSDDQVFWKFPHLAVGF.

The next 11 helical transmembrane spans lie at 12–32, 44–64, 77–97, 125–145, 172–192, 203–223, 238–258, 265–285, 287–307, 331–351, and 358–378; these read CLPL…YFFT, LVAS…GFGF, VAFN…LDGF, ISAG…MVLV, FYLF…KPLP, TIPS…WPSF, VFNT…GSSL, ISMT…GTSC, LIPS…ISIG, NFSL…VRHT, and MIGF…AIAL.

This sequence belongs to the ammonium transporter (TC 2.A.49) family. Rh subfamily.

It localises to the membrane. Functionally, may be part of an oligomeric complex which is likely to have a transport or channel function in the erythrocyte membrane. The polypeptide is RH-like protein IIF (Pan troglodytes (Chimpanzee)).